Reading from the N-terminus, the 1588-residue chain is Pentafunctional AROM polypeptide (1588 aa).

Positions 1–392 are 3-dehydroquinate synthase; it reads MVQLAKVPIL…YGDSAQFVSD (392 aa). NAD(+) contacts are provided by residues 43–45, 78–81, 109–111, and D114; these read DTN, ETSK, and GGV. R125 contacts 7-phospho-2-dehydro-3-deoxy-D-arabino-heptonate. 134 to 135 is a binding site for NAD(+); it reads TS. Residues D141 and K147 each coordinate 7-phospho-2-dehydro-3-deoxy-D-arabino-heptonate. K156 contributes to the NAD(+) binding site. 7-phospho-2-dehydro-3-deoxy-D-arabino-heptonate is bound at residue N157. NAD(+) is bound by residues 174–177 and N185; that span reads WLET. E189 is a binding site for Zn(2+). Residues 189-192 and K258 each bind 7-phospho-2-dehydro-3-deoxy-D-arabino-heptonate; that span reads EVIK. Residue E268 is the Proton acceptor; for 3-dehydroquinate synthase activity of the active site. 7-phospho-2-dehydro-3-deoxy-D-arabino-heptonate-binding positions include 272-276 and H279; that span reads RNLLN. H279 contacts Zn(2+). H283 acts as the Proton acceptor; for 3-dehydroquinate synthase activity in catalysis. 7-phospho-2-dehydro-3-deoxy-D-arabino-heptonate contacts are provided by H295 and K364. H295 provides a ligand contact to Zn(2+). The segment at 405–871 is EPSP synthase; it reads VYPFKDIPAD…WDVLHSELGA (467 aa). The For EPSP synthase activity role is filled by C853. The interval 890–1080 is shikimate kinase; the sequence is SVVIIGMRAA…IPSGRSAFVC (191 aa). 895–902 serves as a coordination point for ATP; sequence GMRAAGKT. Residues 1081 to 1293 are 3-dehydroquinase; sequence LTFDDLTEQT…AAPGQLTVAQ (213 aa). The Proton acceptor; for 3-dehydroquinate dehydratase activity role is filled by H1198. K1227 acts as the Schiff-base intermediate with substrate; for 3-dehydroquinate dehydratase activity in catalysis. The shikimate dehydrogenase stretch occupies residues 1306-1588; the sequence is PKELFVVGKP…KAIFDAVTKE (283 aa).

This sequence in the N-terminal section; belongs to the sugar phosphate cyclases superfamily. Dehydroquinate synthase family. The protein in the 2nd section; belongs to the EPSP synthase family. In the 3rd section; belongs to the shikimate kinase family. It in the 4th section; belongs to the type-I 3-dehydroquinase family. This sequence in the C-terminal section; belongs to the shikimate dehydrogenase family. Homodimer. Zn(2+) serves as cofactor.

It is found in the cytoplasm. It catalyses the reaction 7-phospho-2-dehydro-3-deoxy-D-arabino-heptonate = 3-dehydroquinate + phosphate. The enzyme catalyses 3-dehydroquinate = 3-dehydroshikimate + H2O. The catalysed reaction is shikimate + NADP(+) = 3-dehydroshikimate + NADPH + H(+). It carries out the reaction shikimate + ATP = 3-phosphoshikimate + ADP + H(+). It catalyses the reaction 3-phosphoshikimate + phosphoenolpyruvate = 5-O-(1-carboxyvinyl)-3-phosphoshikimate + phosphate. The protein operates within metabolic intermediate biosynthesis; chorismate biosynthesis; chorismate from D-erythrose 4-phosphate and phosphoenolpyruvate: step 2/7. Its pathway is metabolic intermediate biosynthesis; chorismate biosynthesis; chorismate from D-erythrose 4-phosphate and phosphoenolpyruvate: step 3/7. It participates in metabolic intermediate biosynthesis; chorismate biosynthesis; chorismate from D-erythrose 4-phosphate and phosphoenolpyruvate: step 4/7. It functions in the pathway metabolic intermediate biosynthesis; chorismate biosynthesis; chorismate from D-erythrose 4-phosphate and phosphoenolpyruvate: step 5/7. The protein operates within metabolic intermediate biosynthesis; chorismate biosynthesis; chorismate from D-erythrose 4-phosphate and phosphoenolpyruvate: step 6/7. The AROM polypeptide catalyzes 5 consecutive enzymatic reactions in prechorismate polyaromatic amino acid biosynthesis. In Saccharomyces cerevisiae (strain ATCC 204508 / S288c) (Baker's yeast), this protein is Pentafunctional AROM polypeptide.